The following is a 148-amino-acid chain: Macrodomain Ter protein (148 aa).

Belongs to the MatP family. As to quaternary structure, homodimer.

The protein localises to the cytoplasm. Its function is as follows. Required for spatial organization of the terminus region of the chromosome (Ter macrodomain) during the cell cycle. Prevents early segregation of duplicated Ter macrodomains during cell division. Binds specifically to matS, which is a 13 bp signature motif repeated within the Ter macrodomain. The sequence is that of Macrodomain Ter protein from Haemophilus influenzae (strain ATCC 51907 / DSM 11121 / KW20 / Rd).